The primary structure comprises 622 residues: Carbon monoxide dehydrogenase (622 aa).

Cys40, Cys49, Cys52, Cys57, and Cys68 together coordinate [4Fe-4S] cluster. Positions 256, 334, 442, 473, and 514 each coordinate [Ni-4Fe-5S] cluster.

This sequence belongs to the Ni-containing carbon monoxide dehydrogenase family. In terms of assembly, homodimer. Requires [4Fe-4S] cluster as cofactor. The cofactor is [Ni-4Fe-5S] cluster.

The catalysed reaction is CO + 2 oxidized [2Fe-2S]-[ferredoxin] + H2O = 2 reduced [2Fe-2S]-[ferredoxin] + CO2 + 2 H(+). Functionally, CODH oxidizes carbon monoxide coupled, via CooF, to the reduction of a hydrogen cation by a hydrogenase (possibly CooH). This chain is Carbon monoxide dehydrogenase (cooS), found in Archaeoglobus fulgidus (strain ATCC 49558 / DSM 4304 / JCM 9628 / NBRC 100126 / VC-16).